We begin with the raw amino-acid sequence, 145 residues long: uncharacterized protein (145 aa).

The segment at 1–59 (MSTGTPHYAADRSKSRKSNNNRSIPFRTPTTQKVVKTSIRLGPVNPPTPTRNTQGGHGF) is disordered.

This is an uncharacterized protein from Caenorhabditis elegans.